Reading from the N-terminus, the 97-residue chain is MLIPEDDKLDDEKMINIAKKLWFIGFFFLPWVWLINILYFIPYRNSLNDKVKWYLKFSLIGFLGYSTIFMGWMGIYLVNRNKWGAFGDDISITIPFG.

Residues 1–20 (MLIPEDDKLDDEKMINIAKK) lie on the Cytoplasmic side of the membrane. Residues 21–39 (LWFIGFFFLPWVWLINILY) constitute an intramembrane region (helical). Over 40 to 55 (FIPYRNSLNDKVKWYL) the chain is Cytoplasmic. Residues 56-76 (KFSLIGFLGYSTIFMGWMGIY) form a helical membrane-spanning segment. Residues 77 to 97 (LVNRNKWGAFGDDISITIPFG) lie on the Lumenal side of the membrane.

The protein belongs to the PEN-2 family. As to quaternary structure, the functional gamma-secretase complex is composed of at least four polypeptides: a presenilin homodimer, nicastrin, aph1 and psenen.

It localises to the endoplasmic reticulum membrane. The protein localises to the golgi apparatus. Its subcellular location is the golgi stack membrane. The protein resides in the cell membrane. It is found in the membrane. In terms of biological role, essential subunit of the gamma-secretase complex, an endoprotease complex that catalyzes the intramembrane cleavage of integral membrane proteins such as Notch receptors. The gamma-secretase complex plays a role in Notch and Wnt signaling cascades and regulation of downstream processes via its role in processing key regulatory proteins. The protein is Probable gamma-secretase subunit PEN-2 (psenen) of Dictyostelium discoideum (Social amoeba).